The chain runs to 266 residues: Undecaprenyl-diphosphatase (266 aa).

Transmembrane regions (helical) follow at residues 38 to 58, 80 to 100, 108 to 128, 136 to 156, 176 to 196, 217 to 237, and 245 to 265; these read SDMF…IIYW, LIVA…VLHF, PIAW…WAAA, ITWL…IFPG, AAAT…ASGY, IAFV…LAYI, and FAVY…TGLI.

Belongs to the UppP family.

The protein resides in the cell inner membrane. The catalysed reaction is di-trans,octa-cis-undecaprenyl diphosphate + H2O = di-trans,octa-cis-undecaprenyl phosphate + phosphate + H(+). Its function is as follows. Catalyzes the dephosphorylation of undecaprenyl diphosphate (UPP). Confers resistance to bacitracin. The chain is Undecaprenyl-diphosphatase from Rhizobium leguminosarum bv. trifolii (strain WSM2304).